The following is a 680-amino-acid chain: DNA ligase (680 aa).

Residues 35–39, 86–87, and E111 each bind NAD(+); these read DADFD and SL. Residue K113 is the N6-AMP-lysine intermediate of the active site. The NAD(+) site is built by R134, E174, K290, and K314. Positions 408, 411, 427, and 433 each coordinate Zn(2+). The BRCT domain occupies 597 to 680; that stretch reads VAEQTLEGLT…RLLNTGSADE (84 aa).

The protein belongs to the NAD-dependent DNA ligase family. LigA subfamily. Requires Mg(2+) as cofactor. It depends on Mn(2+) as a cofactor.

It carries out the reaction NAD(+) + (deoxyribonucleotide)n-3'-hydroxyl + 5'-phospho-(deoxyribonucleotide)m = (deoxyribonucleotide)n+m + AMP + beta-nicotinamide D-nucleotide.. DNA ligase that catalyzes the formation of phosphodiester linkages between 5'-phosphoryl and 3'-hydroxyl groups in double-stranded DNA using NAD as a coenzyme and as the energy source for the reaction. It is essential for DNA replication and repair of damaged DNA. The polypeptide is DNA ligase (Corynebacterium glutamicum (strain R)).